The following is a 241-amino-acid chain: Probable transcriptional regulatory protein lin1570 (241 aa).

Residues 1-14 (MAGHSKWNNIQGRK) show a composition bias toward polar residues. The tract at residues 1–22 (MAGHSKWNNIQGRKNAQDSKRS) is disordered.

The protein belongs to the TACO1 family.

The protein resides in the cytoplasm. This is Probable transcriptional regulatory protein lin1570 from Listeria innocua serovar 6a (strain ATCC BAA-680 / CLIP 11262).